The primary structure comprises 422 residues: Serine--tRNA ligase (422 aa).

Residue 229–231 (TAE) coordinates L-serine. Position 260–262 (260–262 (RKE)) interacts with ATP. Residue Glu-283 coordinates L-serine. 347-350 (EISS) lines the ATP pocket. Position 383 (Ser-383) interacts with L-serine.

Belongs to the class-II aminoacyl-tRNA synthetase family. Type-1 seryl-tRNA synthetase subfamily. In terms of assembly, homodimer. The tRNA molecule binds across the dimer.

It localises to the cytoplasm. It carries out the reaction tRNA(Ser) + L-serine + ATP = L-seryl-tRNA(Ser) + AMP + diphosphate + H(+). The enzyme catalyses tRNA(Sec) + L-serine + ATP = L-seryl-tRNA(Sec) + AMP + diphosphate + H(+). The protein operates within aminoacyl-tRNA biosynthesis; selenocysteinyl-tRNA(Sec) biosynthesis; L-seryl-tRNA(Sec) from L-serine and tRNA(Sec): step 1/1. Its function is as follows. Catalyzes the attachment of serine to tRNA(Ser). Is also able to aminoacylate tRNA(Sec) with serine, to form the misacylated tRNA L-seryl-tRNA(Sec), which will be further converted into selenocysteinyl-tRNA(Sec). This chain is Serine--tRNA ligase, found in Geotalea uraniireducens (strain Rf4) (Geobacter uraniireducens).